We begin with the raw amino-acid sequence, 189 residues long: Peptidyl-tRNA hydrolase (189 aa).

Tyrosine 14 provides a ligand contact to tRNA. Histidine 19 acts as the Proton acceptor in catalysis. 3 residues coordinate tRNA: tyrosine 64, asparagine 66, and asparagine 112.

This sequence belongs to the PTH family. As to quaternary structure, monomer.

The protein resides in the cytoplasm. The catalysed reaction is an N-acyl-L-alpha-aminoacyl-tRNA + H2O = an N-acyl-L-amino acid + a tRNA + H(+). Its function is as follows. Hydrolyzes ribosome-free peptidyl-tRNAs (with 1 or more amino acids incorporated), which drop off the ribosome during protein synthesis, or as a result of ribosome stalling. Catalyzes the release of premature peptidyl moieties from peptidyl-tRNA molecules trapped in stalled 50S ribosomal subunits, and thus maintains levels of free tRNAs and 50S ribosomes. The sequence is that of Peptidyl-tRNA hydrolase from Dehalococcoides mccartyi (strain CBDB1).